The following is a 189-amino-acid chain: Glucose-6-phosphate isomerase (189 aa).

The Fe cation site is built by His-88, His-90, Glu-97, and His-136.

Belongs to the archaeal-type GPI family. Homodimer. Fe cation is required as a cofactor.

It is found in the cytoplasm. It carries out the reaction alpha-D-glucose 6-phosphate = beta-D-fructose 6-phosphate. It functions in the pathway carbohydrate degradation; glycolysis; D-glyceraldehyde 3-phosphate and glycerone phosphate from D-glucose: step 2/4. Inhibited by mannose 6-phosphate, fructose 1-phosphate and fructose 1,6-bisphosphate. This is Glucose-6-phosphate isomerase (pgiA) from Pyrococcus furiosus (strain ATCC 43587 / DSM 3638 / JCM 8422 / Vc1).